The chain runs to 600 residues: Probable tripeptidyl-peptidase SED4 (600 aa).

A signal peptide spans 1 to 22 (MVSFTLRAIGACLIGLPALITA). The propeptide at 23–202 (APTSHVSNDF…SVFTSDLEIT (180 aa)) is removed in mature form. N-linked (GlcNAc...) asparagine glycosylation is found at Asn-210 and Asn-281. Residues 212–600 (TITPDCIREL…FEKLSKLVLI (389 aa)) enclose the Peptidase S53 domain. Active-site charge relay system residues include Glu-288 and Asp-292. N-linked (GlcNAc...) asparagine glycosylation is found at Asn-323 and Asn-404. Ser-504 functions as the Charge relay system in the catalytic mechanism. 2 residues coordinate Ca(2+): Asp-546 and Ile-547. Asn-575 carries N-linked (GlcNAc...) asparagine glycosylation. Residues Gly-579 and Asp-581 each coordinate Ca(2+).

It depends on Ca(2+) as a cofactor.

It is found in the secreted. The protein resides in the extracellular space. It carries out the reaction Release of an N-terminal tripeptide from a polypeptide.. In terms of biological role, secreted tripeptidyl-peptidase which degrades proteins at acidic pHs and is involved in virulence. The protein is Probable tripeptidyl-peptidase SED4 (SED4) of Arthroderma benhamiae (strain ATCC MYA-4681 / CBS 112371) (Trichophyton mentagrophytes).